The chain runs to 798 residues: Peroxisome proliferator-activated receptor gamma coactivator 1-alpha (798 aa).

Residue Lys-79 is modified to N6-acetyllysine. A disordered region spans residues 100–140; sequence PVDEDGLPSFDALTDGDVTTDNEASPSSMPDGTPPPQEAEE. Over residues 116–129 the composition is skewed to polar residues; that stretch reads DVTTDNEASPSSMP. The short motif at 144–148 is the LXXLL motif element; sequence LKKLL. Lys-146 carries the N6-acetyllysine modification. Thr-178 carries the phosphothreonine; by AMPK modification. An N6-acetyllysine modification is found at Lys-184. Residues 213 to 277 form a disordered region; sequence YLTTNDDPPH…NDPKGSPFEN (65 aa). Positions 219–237 are enriched in basic and acidic residues; the sequence is DPPHTKPTENRNSSRDKCT. 4 positions are modified to N6-acetyllysine: Lys-254, Lys-271, Lys-278, and Lys-321. The segment at 290–351 is disordered; it reads GTAGLTPPTT…NNSTKKGPEQ (62 aa). The interval 293-339 is interaction with PPARG; that stretch reads GLTPPTTPPHKANQDNPFRASPKLKSSCKTVVPPPSKKPRYSESSGT. A compositionally biased stretch (polar residues) spans 334-346; the sequence is SESSGTQGNNSTK. N6-acetyllysine occurs at positions 347, 413, 442, and 451. The segment at 350 to 798 is mediates interaction with RNF34; it reads EQSELYAQLS…LKEAQRSLRR (449 aa). Ser-539 bears the Phosphoserine; by AMPK mark. Disordered regions lie at residues 542–599, 613–639, and 650–669; these read SFNS…SSRS, HRNSPLYVRSRSRSPYSRRPRYDSYEE, and YRREYEKRESERAKQRERQR. A compositionally biased stretch (basic residues) spans 563 to 578; the sequence is QRMRSRSRSFSRHRSC. Low complexity predominate over residues 579–599; it reads SRSPYSRSRSRSPGSRSSSRS. Over residues 622–631 the composition is skewed to basic residues; that stretch reads SRSRSPYSRR. The RRM domain occupies 677-753; it reads RVIYVGKIRP…TDFELYFCGR (77 aa). N6-acetyllysine occurs at positions 758 and 779.

Homooligomer. Interacts with MYBBP1A; inhibits MYBBP1A transcriptional activation. Interacts with PRDM16, LPIN1 and PML. Interacts (via LXXLL motif) with RORA and RORC (via AF-2 motif); activates RORA and RORC transcriptional activation. Interacts with LRPPRC. Interacts with FOXO1. Interacts with NR5A2. In terms of processing, phosphorylation by AMPK in skeletal muscle increases activation of its own promoter. Phosphorylated by CLK2. Post-translationally, heavily acetylated by KAT2A/GCN5 under conditions of high nutrients, leading to inactivation of PPARGC1A. Deacetylated by SIRT1 in low nutrients/high NAD conditions, leading to its activation. Ubiquitinated. Ubiquitination by RNF34 induces proteasomal degradation. Heart, skeletal muscle, liver and kidney. Expressed at lower levels in brain and pancreas and at very low levels in the intestine and white adipose tissue. In skeletal muscle, levels were lower in obese than in lean subjects and fasting induced a 2-fold increase in levels in the skeletal muscle in obese subjects.

The protein resides in the nucleus. It is found in the PML body. Its subcellular location is the cytoplasm. Its function is as follows. Transcriptional coactivator for steroid receptors and nuclear receptors. Greatly increases the transcriptional activity of PPARG and thyroid hormone receptor on the uncoupling protein promoter. Can regulate key mitochondrial genes that contribute to the program of adaptive thermogenesis. Plays an essential role in metabolic reprogramming in response to dietary availability through coordination of the expression of a wide array of genes involved in glucose and fatty acid metabolism. Acts as a key regulator of gluconeogenesis: stimulates hepatic gluconeogenesis by increasing the expression of gluconeogenic enzymes, and acting together with FOXO1 to promote the fasting gluconeogenic program. Induces the expression of PERM1 in the skeletal muscle in an ESRRA-dependent manner. Also involved in the integration of the circadian rhythms and energy metabolism. Required for oscillatory expression of clock genes, such as BMAL1 and NR1D1, through the coactivation of RORA and RORC, and metabolic genes, such as PDK4 and PEPCK. The chain is Peroxisome proliferator-activated receptor gamma coactivator 1-alpha (PPARGC1A) from Homo sapiens (Human).